Here is a 354-residue protein sequence, read N- to C-terminus: Phosphate acyltransferase (354 aa).

This sequence belongs to the PlsX family. Homodimer. Probably interacts with PlsY.

It localises to the cytoplasm. It catalyses the reaction a fatty acyl-[ACP] + phosphate = an acyl phosphate + holo-[ACP]. Its pathway is lipid metabolism; phospholipid metabolism. Functionally, catalyzes the reversible formation of acyl-phosphate (acyl-PO(4)) from acyl-[acyl-carrier-protein] (acyl-ACP). This enzyme utilizes acyl-ACP as fatty acyl donor, but not acyl-CoA. The protein is Phosphate acyltransferase of Nitrobacter hamburgensis (strain DSM 10229 / NCIMB 13809 / X14).